The following is an 833-amino-acid chain: MEEIPVKVAKLEANGSETRGKMGNRGGLRGTFRIVEPNLQPADITEKTGNIGRTVKLQSNFTKFSVLRSEKFMMYDSVFSQVGLSPKVKLQFIVRVCQENKLPGAFCFDGRRLFTSEKWHGESDIQEFSHDEKKMTLRLVSTILPETEEYYQMINVLLNNLQVMLGQERIGKGYFLSPNITKDEVPRNSGPTFFETNSFKVLGGFGTTLQRGTKPTGELTTLLYIERINRVLNDNSVMKAYNRRSIDQLIGRDIITKYNNKTYRISEIKEMNVDEKFEMGGRTLSYAEYFKERYNIRLTQGDQPFVLTRVKKPMRRERKKKDEEGVEKEKEKEAPEEKDMTLNIPGELCFLCGFSDQEKSNMDLQKNLGCVLKREPRERLDDIPAYCNWIKNSDAATGMCNKWQLKIDNKPLEIEGRELPPCDVISGGSKINEKMGDDWKFGRVQFDIKRDRKHEIDVVIVDRNDFQYKNFMNDVEQELRNMRIDARVGKVNTCGPNDVERCLNDAARSGSGCAKMALVFVPDDRVYAKVKSFTMSTGLLTQCVTTRNGTNRNDKRRKVVSSKTVMQIFAKFGYDPWTVEIKLRPTMIVGMDTYHNKSSKKSIQASVFSINSTFTQYMSFVVNSPKGRQEFHETLGKNFNLALEDFKKRYDILPQRILVFRDGVGDNQLQFTKNFEVDAMKPLIENIYKGNGFPVPQIIYVIVKKRVGTKLFNRGNNPNPGTVVDKEIVKPNFYEFFLVSQRTTKGTATPTNYNVLEDTRLLTKKGTMDPMAPNELQKITYALTHLYFNWMGTIRVPVPVHYAHRLAELVGKVHKGSNPVAINERIRNRLFYL.

The PAZ domain occupies 227 to 353; sequence RINRVLNDNS…IPGELCFLCG (127 aa). A disordered region spans residues 313–338; that stretch reads PMRRERKKKDEEGVEKEKEKEAPEEK. The segment covering 320 to 338 has biased composition (basic and acidic residues); it reads KKDEEGVEKEKEKEAPEEK. Residues 515–815 form the Piwi domain; that stretch reads KMALVFVPDD…LAELVGKVHK (301 aa).

It belongs to the argonaute family. Piwi subfamily. In terms of tissue distribution, expressed in dividing adult stem cells.

Functionally, required for the production of functional progeny from adult somatic stem cells (neoblasts). The sequence is that of Piwi-like protein 2 (wi-2) from Schmidtea mediterranea (Freshwater planarian flatworm).